Here is a 363-residue protein sequence, read N- to C-terminus: NAD(P)H-quinone oxidoreductase subunit 1, chloroplastic (363 aa).

6 helical membrane-spanning segments follow: residues 27–47 (IWLL…VLVI), 98–118 (FSIG…VIPF), 127–147 (LSIG…GLLM), 248–268 (YSGI…LVSS), 300–320 (VFGT…FLFI), and 336–356 (LLNL…LLTT).

The protein belongs to the complex I subunit 1 family. As to quaternary structure, NDH is composed of at least 16 different subunits, 5 of which are encoded in the nucleus.

It localises to the plastid. The protein resides in the chloroplast thylakoid membrane. It catalyses the reaction a plastoquinone + NADH + (n+1) H(+)(in) = a plastoquinol + NAD(+) + n H(+)(out). It carries out the reaction a plastoquinone + NADPH + (n+1) H(+)(in) = a plastoquinol + NADP(+) + n H(+)(out). Its function is as follows. NDH shuttles electrons from NAD(P)H:plastoquinone, via FMN and iron-sulfur (Fe-S) centers, to quinones in the photosynthetic chain and possibly in a chloroplast respiratory chain. The immediate electron acceptor for the enzyme in this species is believed to be plastoquinone. Couples the redox reaction to proton translocation, and thus conserves the redox energy in a proton gradient. This chain is NAD(P)H-quinone oxidoreductase subunit 1, chloroplastic, found in Platanus occidentalis (Sycamore).